Reading from the N-terminus, the 451-residue chain is MFAENLTRIGSNVAGLFFVWSTLKRYFPRQIQQLLFNAIQRIPIFKRLSDKILEFFSPYAYIRFREIEGYRYNYAFAAVKTYLGAKVNSEVKNLKGNQVKENMSLDLKRDDVKIEEEYEGVKMWWEIFRCVKGKKICRLTFHRSNWDVVTGSYLRYVVEEGKSIKARKKKVMVLMNNPSLNWKTSMKGLWTCTEFEHPATFDTLAMDIDKKDEIFRDLVAFRDGKEYYDRIGKAWKRGYLLYGPPGTGKSTMIAAMANLMKYNIYDLELTSIGNNWELKKLLIATTNKSIIVIEDIDCSLDLTGEREVKDLKGDKEGKKSNAVTLSGLLNFIDGIWSACGQERILVFTTNHVGKLDQALIRRGRMDMHIELSYCTFGAFKILAKNYLNIDSHHLFGEIESLLKETKITPADVAEHMMAKEVDGSLKGLIRALERIKWSQNVKVEEQLQQGD.

The N-terminal 48 residues, 1 to 48, are a transit peptide targeting the mitochondrion; that stretch reads MFAENLTRIGSNVAGLFFVWSTLKRYFPRQIQQLLFNAIQRIPIFKRL. 243–250 provides a ligand contact to ATP; sequence GPPGTGKS.

This sequence belongs to the AAA ATPase family. BCS1 subfamily. Requires Mg(2+) as cofactor.

It is found in the mitochondrion. The enzyme catalyses ATP + H2O = ADP + phosphate + H(+). In Arabidopsis thaliana (Mouse-ear cress), this protein is AAA-ATPase At3g28570, mitochondrial.